A 282-amino-acid chain; its full sequence is MAQPLREVLVWLNNKIKEINPESAWLEAELLVAFVLNKDRAFIYTIDFLTDEEVEKLKKLLDLRKKGIPLNYIIEKKQFYDIELFVERGVLIPRSETEILIEVAKDTILKEGYKKIVEIGVGSGNISITLAKEFKDIKIYACDISPEAIKVARFNAKKHKVSDKIEFFFGFLLYPMVHRNVDFELIISNPPYIASWEFPFLQKEVKKEPWKALYGGWDGCEFYRKLFTLLKKRGKNFTAILEISPYIYHKVLNILKNFFDSVIIESFRDYLGHERVIKVIWH.

Residues 120-124 (GVGSG), aspartate 143, and asparagine 189 contribute to the S-adenosyl-L-methionine site. A substrate-binding site is contributed by 189–192 (NPPY).

Belongs to the protein N5-glutamine methyltransferase family. PrmC subfamily.

The enzyme catalyses L-glutaminyl-[peptide chain release factor] + S-adenosyl-L-methionine = N(5)-methyl-L-glutaminyl-[peptide chain release factor] + S-adenosyl-L-homocysteine + H(+). Its function is as follows. Methylates the class 1 translation termination release factors RF1/PrfA and RF2/PrfB on the glutamine residue of the universally conserved GGQ motif. The sequence is that of Release factor glutamine methyltransferase from Dictyoglomus turgidum (strain DSM 6724 / Z-1310).